The chain runs to 421 residues: Aspartokinase (421 aa).

7-10 is an ATP binding site; that stretch reads KYGG. 25-30 is a binding site for substrate; the sequence is RIVETK. ATP is bound at residue serine 41. Residues 45–49, glutamate 74, 125–126, 151–154, and serine 154 contribute to the substrate site; these read DTTDD, LD, and RGGS. Residues 174-175, 180-185, and lysine 210 contribute to the ATP site; these read TD and FTADPR. 2 ACT domains span residues 267–348 and 349–421; these read VTVV…GKVS and LIGA…GTGR. Substrate is bound by residues aspartate 274, 274-279, 292-294, glutamine 298, 360-361, 374-375, and 381-382; these read DVPGYA, NID, VT, NI, and SE.

The protein belongs to the aspartokinase family. Heterotetramer consisting of 2 isoforms Alpha (catalytic and regulation) and of a homodimer of 2 isoforms Beta (regulation).

The catalysed reaction is L-aspartate + ATP = 4-phospho-L-aspartate + ADP. It functions in the pathway amino-acid biosynthesis; L-lysine biosynthesis via DAP pathway; (S)-tetrahydrodipicolinate from L-aspartate: step 1/4. Its pathway is amino-acid biosynthesis; L-methionine biosynthesis via de novo pathway; L-homoserine from L-aspartate: step 1/3. It participates in amino-acid biosynthesis; L-threonine biosynthesis; L-threonine from L-aspartate: step 1/5. Feedback inhibition by lysine and threonine. In terms of biological role, catalyzes the phosphorylation of the beta-carboxyl group of aspartic acid with ATP to yield 4-phospho-L-aspartate, which is involved in the branched biosynthetic pathway leading to the biosynthesis of amino acids lysine, threonine, isoleucine and methionine. The chain is Aspartokinase (ask) from Mycolicibacterium smegmatis (Mycobacterium smegmatis).